Reading from the N-terminus, the 57-residue chain is Putative secreted protein ML2569.1 (57 aa).

A signal peptide spans 1-32; the sequence is MSRIVAPAAASVVVGLLLGAATIFGMTLMVQQ. The disordered stretch occupies residues 34–57; sequence TKPPLPGGDPQSSVLNRVEYGNRT.

In Mycobacterium leprae (strain TN), this protein is Putative secreted protein ML2569.1.